The primary structure comprises 265 residues: H-2 class II histocompatibility antigen, A beta chain (265 aa).

A signal peptide spans 1–27; it reads MALQIPSLLLSAAVVVLMVLSSPGTEG. Residues 28–122 are beta-1; it reads GDSERHFVYQ…PETHTSLRRL (95 aa). The Extracellular portion of the chain corresponds to 28-226; the sequence is GDSERHFVYQ…RAQSESAWSK (199 aa). Intrachain disulfides connect Cys42–Cys106 and Cys145–Cys201. An N-linked (GlcNAc...) asparagine glycan is attached at Asn46. Residues 123-216 form a beta-2 region; the sequence is EQPNVVISLS…SLKSPITVEW (94 aa). The region spanning 125 to 213 is the Ig-like C1-type domain; that stretch reads PNVVISLSRT…EHPSLKSPIT (89 aa). Residues 217 to 226 are connecting peptide; the sequence is RAQSESAWSK. The chain crosses the membrane as a helical span at residues 227–247; the sequence is MLSGIGGCVLGVIFLGLGLFI. Residues 248 to 265 lie on the Cytoplasmic side of the membrane; sequence RHRSQKGPRGPPPAGLLQ.

This sequence belongs to the MHC class II family. In terms of processing, ubiquitinated in immature dendritic cells leading to down-regulation of MHC class II.

It is found in the membrane. This Mus musculus (Mouse) protein is H-2 class II histocompatibility antigen, A beta chain (H2-Ab1).